Consider the following 529-residue polypeptide: Bifunctional purine biosynthesis protein PurH (529 aa).

The MGS-like domain maps to 1–148 (MQQRRPVRRA…KNHKDVAIVV (148 aa)). Lysine 287 bears the N6-acetyllysine mark.

The protein belongs to the PurH family.

It carries out the reaction (6R)-10-formyltetrahydrofolate + 5-amino-1-(5-phospho-beta-D-ribosyl)imidazole-4-carboxamide = 5-formamido-1-(5-phospho-D-ribosyl)imidazole-4-carboxamide + (6S)-5,6,7,8-tetrahydrofolate. The catalysed reaction is IMP + H2O = 5-formamido-1-(5-phospho-D-ribosyl)imidazole-4-carboxamide. It functions in the pathway purine metabolism; IMP biosynthesis via de novo pathway; 5-formamido-1-(5-phospho-D-ribosyl)imidazole-4-carboxamide from 5-amino-1-(5-phospho-D-ribosyl)imidazole-4-carboxamide (10-formyl THF route): step 1/1. Its pathway is purine metabolism; IMP biosynthesis via de novo pathway; IMP from 5-formamido-1-(5-phospho-D-ribosyl)imidazole-4-carboxamide: step 1/1. The protein is Bifunctional purine biosynthesis protein PurH of Escherichia fergusonii (strain ATCC 35469 / DSM 13698 / CCUG 18766 / IAM 14443 / JCM 21226 / LMG 7866 / NBRC 102419 / NCTC 12128 / CDC 0568-73).